Consider the following 246-residue polypeptide: Dihydromethanopterin reductase (acceptor) (246 aa).

2 4Fe-4S ferredoxin-type domains span residues 150-178 (LPYA…VKRD) and 179-208 (NFVE…EGKE). Residues cysteine 159, cysteine 162, cysteine 165, cysteine 169, cysteine 188, cysteine 191, cysteine 194, and cysteine 198 each coordinate [4Fe-4S] cluster.

Homodimer. It depends on [4Fe-4S] cluster as a cofactor.

The catalysed reaction is 5,6,7,8-tetrahydromethanopterin + A = 7,8-dihydromethanopterin + AH2. It participates in cofactor biosynthesis; 5,6,7,8-tetrahydromethanopterin biosynthesis. Functionally, involved in the biosynthesis of tetrahydromethanopterin, a coenzyme used in methanogenesis. Catalyzes the reduction of dihydromethanopterin (H(2)MPT) to tetrahydromethanopterin (H(4)MPT). Ferredoxin may serve as an electron donor. The polypeptide is Dihydromethanopterin reductase (acceptor) (Methanocaldococcus jannaschii (strain ATCC 43067 / DSM 2661 / JAL-1 / JCM 10045 / NBRC 100440) (Methanococcus jannaschii)).